Here is a 389-residue protein sequence, read N- to C-terminus: Gastricsin (389 aa).

The signal sequence occupies residues 1 to 16; that stretch reads MKWMVVALVCLQLLEA. The propeptide at 17 to 59 is activation peptide; the sequence is KVTKVTLKKFKSIRENLREQGLLEDFLKTNHYDPAQKYHFGDF. The region spanning 73–386 is the Peptidase A1 domain; it reads YFGEISIGTP…DMGNNRVGFA (314 aa). Residue Asp91 is part of the active site. Cystine bridges form between Cys104/Cys109 and Cys268/Cys272. Asp277 is a catalytic residue. A disulfide bridge links Cys311 with Cys344.

This sequence belongs to the peptidase A1 family.

The protein resides in the secreted. The enzyme catalyses More restricted specificity than pepsin A, but shows preferential cleavage at Tyr-|-Xaa bonds. High activity on hemoglobin.. Functionally, hydrolyzes a variety of proteins. The sequence is that of Gastricsin (PGC) from Suncus murinus (Asian house shrew).